The chain runs to 122 residues: MLKEFKNFILRGNVLDLAVGVIIGAAFTALVKSLVDNLINPLIGMFVQSTALAHLSVTVGKTKFTYGAFLNDVINFIITAFVIFILIKFINKLFPKKEETVEEQKNEELETLQEIRDLLKKQ.

A run of 2 helical transmembrane segments spans residues 14 to 34 (VLDL…VKSL) and 67 to 87 (GAFL…FILI).

This sequence belongs to the MscL family. Homopentamer.

The protein localises to the cell membrane. Its function is as follows. Channel that opens in response to stretch forces in the membrane lipid bilayer. May participate in the regulation of osmotic pressure changes within the cell. This Lactococcus lactis subsp. lactis (strain IL1403) (Streptococcus lactis) protein is Large-conductance mechanosensitive channel.